We begin with the raw amino-acid sequence, 243 residues long: Uridylate kinase (243 aa).

18-21 serves as a coordination point for ATP; it reads KLGG. Position 59 (glycine 59) interacts with UMP. ATP contacts are provided by glycine 60 and arginine 64. Residues aspartate 79 and 140–147 contribute to the UMP site; that span reads MGMPYFST. ATP is bound by residues tyrosine 173 and aspartate 176.

This sequence belongs to the UMP kinase family. In terms of assembly, homohexamer.

It localises to the cytoplasm. The catalysed reaction is UMP + ATP = UDP + ADP. Its pathway is pyrimidine metabolism; CTP biosynthesis via de novo pathway; UDP from UMP (UMPK route): step 1/1. Inhibited by UTP. Functionally, catalyzes the reversible phosphorylation of UMP to UDP. The protein is Uridylate kinase of Corynebacterium efficiens (strain DSM 44549 / YS-314 / AJ 12310 / JCM 11189 / NBRC 100395).